A 233-amino-acid polypeptide reads, in one-letter code: Purine nucleoside phosphorylase DeoD-type (233 aa).

Histidine 4 contributes to the a purine D-ribonucleoside binding site. Residues glycine 20, arginine 24, arginine 43, and 87 to 90 (RVGT) contribute to the phosphate site. A purine D-ribonucleoside-binding positions include 178–180 (EME) and 202–203 (SD). The Proton donor role is filled by aspartate 203.

It belongs to the PNP/UDP phosphorylase family. In terms of assembly, homohexamer; trimer of homodimers.

It carries out the reaction a purine D-ribonucleoside + phosphate = a purine nucleobase + alpha-D-ribose 1-phosphate. It catalyses the reaction a purine 2'-deoxy-D-ribonucleoside + phosphate = a purine nucleobase + 2-deoxy-alpha-D-ribose 1-phosphate. Its function is as follows. Catalyzes the reversible phosphorolytic breakdown of the N-glycosidic bond in the beta-(deoxy)ribonucleoside molecules, with the formation of the corresponding free purine bases and pentose-1-phosphate. The protein is Purine nucleoside phosphorylase DeoD-type of Listeria innocua serovar 6a (strain ATCC BAA-680 / CLIP 11262).